An 84-amino-acid chain; its full sequence is Small ribosomal subunit protein uS17 (84 aa).

Belongs to the universal ribosomal protein uS17 family. As to quaternary structure, part of the 30S ribosomal subunit.

Its function is as follows. One of the primary rRNA binding proteins, it binds specifically to the 5'-end of 16S ribosomal RNA. In Borrelia recurrentis (strain A1), this protein is Small ribosomal subunit protein uS17.